Consider the following 157-residue polypeptide: Phosphopantetheine adenylyltransferase (157 aa).

Ser-9 lines the substrate pocket. ATP is bound by residues Ser-9–Phe-10 and His-17. The substrate site is built by Lys-41, Val-73, and Lys-87. ATP is bound by residues Gly-88 to Arg-90, Glu-98, and Tyr-122 to Ser-128.

This sequence belongs to the bacterial CoaD family. Homohexamer. Mg(2+) serves as cofactor.

The protein resides in the cytoplasm. The catalysed reaction is (R)-4'-phosphopantetheine + ATP + H(+) = 3'-dephospho-CoA + diphosphate. Its pathway is cofactor biosynthesis; coenzyme A biosynthesis; CoA from (R)-pantothenate: step 4/5. Its function is as follows. Reversibly transfers an adenylyl group from ATP to 4'-phosphopantetheine, yielding dephospho-CoA (dPCoA) and pyrophosphate. In Mycobacterium marinum (strain ATCC BAA-535 / M), this protein is Phosphopantetheine adenylyltransferase.